The primary structure comprises 477 residues: Ribulose bisphosphate carboxylase large chain (477 aa).

Residues 1 to 2 (MS) constitute a propeptide that is removed on maturation. N-acetylproline is present on proline 3. 2 residues coordinate substrate: asparagine 123 and threonine 173. Residue lysine 175 is the Proton acceptor of the active site. A substrate-binding site is contributed by lysine 177. Positions 201, 203, and 204 each coordinate Mg(2+). Lysine 201 bears the N6-carboxylysine mark. The Proton acceptor role is filled by histidine 294. Residues arginine 295, histidine 327, and serine 379 each contribute to the substrate site.

It belongs to the RuBisCO large chain family. Type I subfamily. In terms of assembly, heterohexadecamer of 8 large chains and 8 small chains; disulfide-linked. The disulfide link is formed within the large subunit homodimers. Requires Mg(2+) as cofactor. Post-translationally, the disulfide bond which can form in the large chain dimeric partners within the hexadecamer appears to be associated with oxidative stress and protein turnover.

The protein resides in the plastid. The protein localises to the chloroplast. It catalyses the reaction 2 (2R)-3-phosphoglycerate + 2 H(+) = D-ribulose 1,5-bisphosphate + CO2 + H2O. The catalysed reaction is D-ribulose 1,5-bisphosphate + O2 = 2-phosphoglycolate + (2R)-3-phosphoglycerate + 2 H(+). Functionally, ruBisCO catalyzes two reactions: the carboxylation of D-ribulose 1,5-bisphosphate, the primary event in carbon dioxide fixation, as well as the oxidative fragmentation of the pentose substrate in the photorespiration process. Both reactions occur simultaneously and in competition at the same active site. This is Ribulose bisphosphate carboxylase large chain from Avena sativa (Oat).